The primary structure comprises 37 residues: Large ribosomal subunit protein bL36c (37 aa).

Belongs to the bacterial ribosomal protein bL36 family.

The protein localises to the plastid. Its subcellular location is the chloroplast. This chain is Large ribosomal subunit protein bL36c, found in Phalaenopsis aphrodite subsp. formosana (Moth orchid).